The following is a 237-amino-acid chain: Sugar fermentation stimulation protein homolog (237 aa).

This sequence belongs to the SfsA family.

The chain is Sugar fermentation stimulation protein homolog from Pseudomonas savastanoi pv. phaseolicola (strain 1448A / Race 6) (Pseudomonas syringae pv. phaseolicola (strain 1448A / Race 6)).